We begin with the raw amino-acid sequence, 103 residues long: Toluene-4-monooxygenase system, effector component (103 aa).

It belongs to the TmoD/XamoD family. The alkene monooxygenase multicomponent enzyme system is composed of an electron transfer component and a monooxygenase component interacting with the effector protein TmoD. The electron transfer component is composed of a ferredoxin reductase (TmoF) and a ferredoxin (TmoC), and the monooxygenase component is formed by a heterohexamer (dimer of heterotrimers) of two alpha subunits (TmoA), two beta subunits (TmoE) and two gamma subunits (TmoB).

It functions in the pathway xenobiotic degradation; toluene degradation. Functionally, effector component of the toluene-4-monooxygenase multicomponent enzyme system which catalyzes the O2- and NADH-dependent hydroxylation of toluene to form p-cresol. Required for optimal efficiency and specificity of the holoenzyme. This is Toluene-4-monooxygenase system, effector component from Ectopseudomonas mendocina (Pseudomonas mendocina).